Consider the following 147-residue polypeptide: Phosphoribosyl-AMP cyclohydrolase 2 (147 aa).

Position 99 (D99) interacts with Mg(2+). Residue C100 participates in Zn(2+) binding. Residues D101 and D103 each coordinate Mg(2+). 2 residues coordinate Zn(2+): C116 and C123.

This sequence belongs to the PRA-CH family. In terms of assembly, homodimer. It depends on Mg(2+) as a cofactor. Zn(2+) is required as a cofactor.

Its subcellular location is the cytoplasm. It catalyses the reaction 1-(5-phospho-beta-D-ribosyl)-5'-AMP + H2O = 1-(5-phospho-beta-D-ribosyl)-5-[(5-phospho-beta-D-ribosylamino)methylideneamino]imidazole-4-carboxamide. It participates in amino-acid biosynthesis; L-histidine biosynthesis; L-histidine from 5-phospho-alpha-D-ribose 1-diphosphate: step 3/9. In terms of biological role, catalyzes the hydrolysis of the adenine ring of phosphoribosyl-AMP. The sequence is that of Phosphoribosyl-AMP cyclohydrolase 2 from Pseudomonas fluorescens (strain ATCC BAA-477 / NRRL B-23932 / Pf-5).